Here is a 128-residue protein sequence, read N- to C-terminus: Cytochrome c-type biogenesis protein CcmE (128 aa).

Residues 1–8 (MQKRVRNR) are Cytoplasmic-facing. The chain crosses the membrane as a helical; Signal-anchor for type II membrane protein span at residues 9–29 (LITIIICFCSAALGISIVLYN). Residues 30-128 (LEKNIVFFLP…KHDENYRPPS (99 aa)) lie on the Periplasmic side of the membrane. 2 residues coordinate heme: H120 and Y124.

This sequence belongs to the CcmE/CycJ family.

It is found in the cell inner membrane. Its function is as follows. Heme chaperone required for the biogenesis of c-type cytochromes. Transiently binds heme delivered by CcmC and transfers the heme to apo-cytochromes in a process facilitated by CcmF and CcmH. This is Cytochrome c-type biogenesis protein CcmE from Rickettsia felis (strain ATCC VR-1525 / URRWXCal2) (Rickettsia azadi).